A 256-amino-acid polypeptide reads, in one-letter code: Nickel import ATP-binding protein NikD (256 aa).

Positions 6–245 (LEIRGLRIET…PASATARTLL (240 aa)) constitute an ABC transporter domain. 38-45 (GASGSGKS) is a binding site for ATP.

It belongs to the ABC transporter superfamily. Nickel importer (TC 3.A.1.5.3) family. As to quaternary structure, the complex is composed of two ATP-binding proteins (NikD and NikE), two transmembrane proteins (NikB and NikC) and a solute-binding protein (NikA).

The protein localises to the cell inner membrane. The catalysed reaction is Ni(2+)(out) + ATP + H2O = Ni(2+)(in) + ADP + phosphate + H(+). Part of the ABC transporter complex NikABCDE involved in nickel import. Responsible for energy coupling to the transport system. The chain is Nickel import ATP-binding protein NikD from Pseudomonas putida (strain ATCC 47054 / DSM 6125 / CFBP 8728 / NCIMB 11950 / KT2440).